Consider the following 275-residue polypeptide: Dermonecrotic toxin SpeSicTox-betaIIA2v (275 aa).

His-5 is a catalytic residue. Residues Glu-25 and Asp-27 each contribute to the Mg(2+) site. Catalysis depends on His-41, which acts as the Nucleophile. 2 disulfides stabilise this stretch: Cys-45/Cys-51 and Cys-47/Cys-190. Asp-85 contacts Mg(2+).

This sequence belongs to the arthropod phospholipase D family. Class II subfamily. Mg(2+) serves as cofactor. Expressed by the venom gland.

The protein localises to the secreted. It carries out the reaction an N-(acyl)-sphingosylphosphocholine = an N-(acyl)-sphingosyl-1,3-cyclic phosphate + choline. The catalysed reaction is an N-(acyl)-sphingosylphosphoethanolamine = an N-(acyl)-sphingosyl-1,3-cyclic phosphate + ethanolamine. The enzyme catalyses a 1-acyl-sn-glycero-3-phosphocholine = a 1-acyl-sn-glycero-2,3-cyclic phosphate + choline. It catalyses the reaction a 1-acyl-sn-glycero-3-phosphoethanolamine = a 1-acyl-sn-glycero-2,3-cyclic phosphate + ethanolamine. In terms of biological role, dermonecrotic toxins cleave the phosphodiester linkage between the phosphate and headgroup of certain phospholipids (sphingolipid and lysolipid substrates), forming an alcohol (often choline) and a cyclic phosphate. This toxin acts on sphingomyelin (SM). It may also act on ceramide phosphoethanolamine (CPE), lysophosphatidylcholine (LPC) and lysophosphatidylethanolamine (LPE), but not on lysophosphatidylserine (LPS), and lysophosphatidylglycerol (LPG). It acts by transphosphatidylation, releasing exclusively cyclic phosphate products as second products. Induces dermonecrosis, hemolysis, increased vascular permeability, edema, inflammatory response, and platelet aggregation. This is Dermonecrotic toxin SpeSicTox-betaIIA2v from Sicarius peruensis (Six-eyed sand spider).